A 490-amino-acid chain; its full sequence is ATP synthase subunit beta (490 aa).

173-180 (GGAGVGKT) is a binding site for ATP.

It belongs to the ATPase alpha/beta chains family. In terms of assembly, F-type ATPases have 2 components, CF(1) - the catalytic core - and CF(0) - the membrane proton channel. CF(1) has five subunits: alpha(3), beta(3), gamma(1), delta(1), epsilon(1). CF(0) has three main subunits: a(1), b(2) and c(9-12). The alpha and beta chains form an alternating ring which encloses part of the gamma chain. CF(1) is attached to CF(0) by a central stalk formed by the gamma and epsilon chains, while a peripheral stalk is formed by the delta and b chains.

The protein resides in the cell membrane. The catalysed reaction is ATP + H2O + 4 H(+)(in) = ADP + phosphate + 5 H(+)(out). Its function is as follows. Produces ATP from ADP in the presence of a proton gradient across the membrane. The catalytic sites are hosted primarily by the beta subunits. The chain is ATP synthase subunit beta from Bifidobacterium longum subsp. infantis (strain ATCC 15697 / DSM 20088 / JCM 1222 / NCTC 11817 / S12).